Here is a 315-residue protein sequence, read N- to C-terminus: Transaldolase (315 aa).

The Schiff-base intermediate with substrate role is filled by K131.

The protein belongs to the transaldolase family. Type 1 subfamily. Homodimer.

It localises to the cytoplasm. The enzyme catalyses D-sedoheptulose 7-phosphate + D-glyceraldehyde 3-phosphate = D-erythrose 4-phosphate + beta-D-fructose 6-phosphate. Its pathway is carbohydrate degradation; pentose phosphate pathway; D-glyceraldehyde 3-phosphate and beta-D-fructose 6-phosphate from D-ribose 5-phosphate and D-xylulose 5-phosphate (non-oxidative stage): step 2/3. Its function is as follows. Transaldolase is important for the balance of metabolites in the pentose-phosphate pathway. In Actinobacillus pleuropneumoniae serotype 5b (strain L20), this protein is Transaldolase.